Here is a 463-residue protein sequence, read N- to C-terminus: Mitochondrial dynamics protein MID51 (463 aa).

Residues 1-23 are Mitochondrial intermembrane-facing; it reads MAGAGERKGKKDDNGIGTAIDFV. Residues 24 to 46 traverse the membrane as a helical segment; it reads LSNARLVLGVGGAAMLGIATLAV. Over 47-463 the chain is Cytoplasmic; that stretch reads KRMYDRAISA…LSEPEVLLQT (417 aa). The segment at 49-195 is dimerization; it reads MYDRAISAPT…LSGSLYDDLQ (147 aa). Phosphoserine is present on residues Ser55, Ser59, Ser79, and Ser94. The segment at 57-77 is disordered; the sequence is PTSPTRLSHSGKRSWEEPNWM. An important for interaction with DNM1L region spans residues 160–169; sequence AAVDICAELR. Residues Ser187, Ser189, and His201 each contribute to the ADP site. Residues 234–243 are important for interaction with DNM1L; sequence RRENPEYFPR. Residues Ser340, Arg342, and Lys368 each contribute to the ADP site.

It belongs to the MID49/MID51 family. As to quaternary structure, homodimer. Interacts with DNM1L.

The protein resides in the mitochondrion outer membrane. Functionally, mitochondrial outer membrane protein which regulates mitochondrial fission/fusion dynamics. Promotes the recruitment and association of the fission mediator dynamin-related protein 1 (DNM1L) to the mitochondrial surface independently of the mitochondrial fission FIS1 and MFF proteins. Regulates DNM1L GTPase activity and DNM1L oligomerization. Binds ADP and can also bind GDP, although with lower affinity. Does not bind CDP, UDP, ATP, AMP or GTP. Inhibits DNM1L GTPase activity in the absence of bound ADP. Requires ADP to stimulate DNM1L GTPase activity and the assembly of DNM1L into long, oligomeric tubules with a spiral pattern, as opposed to the ring-like DNM1L oligomers observed in the absence of bound ADP. Does not require ADP for its function in recruiting DNM1L. This is Mitochondrial dynamics protein MID51 (Mief1) from Rattus norvegicus (Rat).